A 392-amino-acid polypeptide reads, in one-letter code: uncharacterized protein (392 aa).

The protein belongs to the glycosyltransferase 2 family.

This is an uncharacterized protein from Bacillus subtilis (strain 168).